The primary structure comprises 393 residues: Elongation factor Tu (393 aa).

Positions 10 to 203 (KPHVNIGTIG…AVDDYIPEPV (194 aa)) constitute a tr-type G domain. Positions 19-26 (GHVDHGKT) are G1. Residue 19 to 26 (GHVDHGKT) coordinates GTP. Thr26 is a binding site for Mg(2+). Residues 60 to 64 (GITIS) are G2. A G3 region spans residues 81-84 (DCPG). Residues 81 to 85 (DCPGH) and 136 to 139 (NKVD) each bind GTP. The tract at residues 136 to 139 (NKVD) is G4. Residues 173-175 (SAL) are G5.

Belongs to the TRAFAC class translation factor GTPase superfamily. Classic translation factor GTPase family. EF-Tu/EF-1A subfamily. In terms of assembly, monomer.

It is found in the cytoplasm. It catalyses the reaction GTP + H2O = GDP + phosphate + H(+). In terms of biological role, GTP hydrolase that promotes the GTP-dependent binding of aminoacyl-tRNA to the A-site of ribosomes during protein biosynthesis. This is Elongation factor Tu from Chlorobium phaeobacteroides (strain BS1).